Here is a 244-residue protein sequence, read N- to C-terminus: 14-3-3 protein homolog 1 (244 aa).

The protein belongs to the 14-3-3 family.

This Echinococcus multilocularis (Fox tapeworm) protein is 14-3-3 protein homolog 1.